Here is a 658-residue protein sequence, read N- to C-terminus: Exoribonuclease 2 (658 aa).

An RNB domain is found at 189–530; it reads REDLTSLYFT…VNHRLIKQVL (342 aa). The S1 motif domain maps to 576 to 658; it reads AVEFDCEIAD…ETRSIVGNII (83 aa).

Belongs to the RNR ribonuclease family. RNase II subfamily.

The protein localises to the cytoplasm. The enzyme catalyses Exonucleolytic cleavage in the 3'- to 5'-direction to yield nucleoside 5'-phosphates.. In terms of biological role, involved in mRNA degradation. Hydrolyzes single-stranded polyribonucleotides processively in the 3' to 5' direction. This Actinobacillus pleuropneumoniae serotype 5b (strain L20) protein is Exoribonuclease 2.